The following is a 201-amino-acid chain: Lipopolysaccharide core heptose(II)-phosphate phosphatase (201 aa).

The signal sequence occupies residues 1–35 (MLAFTLRFIKNKRYLATLAGALVIIAGLTSQHAWS).

This sequence belongs to the phosphoglycerate mutase family. Ais subfamily.

The protein resides in the periplasm. Its pathway is bacterial outer membrane biogenesis; lipopolysaccharide metabolism. In terms of biological role, catalyzes the dephosphorylation of heptose(II) of the outer membrane lipopolysaccharide core. The polypeptide is Lipopolysaccharide core heptose(II)-phosphate phosphatase (Salmonella choleraesuis (strain SC-B67)).